A 325-amino-acid polypeptide reads, in one-letter code: Helicase VP6-A (325 aa).

Disordered stretches follow at residues 1–127 and 174–230; these read MLLA…NGRR and EGVA…EPAR. Composition is skewed to basic and acidic residues over residues 8-18, 32-54, 61-79, and 92-105; these read VIKRSSEELKQ, EGGK…KDGE, GQKE…DRRI, and PGER…RGDG. Lysine 106 contacts ATP. The segment covering 106 to 122 has biased composition (gly residues); that stretch reads KVGGGGGDADAGVGATG. The segment covering 175 to 229 has biased composition (basic and acidic residues); the sequence is GVAEQTERSRDLRRKEKNGTHAKAVERGGRKQRKESHGDAQREGVEEEKTSEEPA.

It belongs to the orbivirus VP6 family. In terms of assembly, homohexamer.

The protein resides in the virion. The catalysed reaction is ATP + H2O = ADP + phosphate + H(+). Its function is as follows. ATP dependent RNA helicase essential for RNA packaging and viral transcription. Possesses ss- and dsRNA-binding capacity. This chain is Helicase VP6-A (Segment-9), found in Bluetongue virus 13 (isolate USA) (BTV 13).